The following is a 103-amino-acid chain: Small ribosomal subunit protein uS10 (103 aa).

It belongs to the universal ribosomal protein uS10 family. Part of the 30S ribosomal subunit.

Its function is as follows. Involved in the binding of tRNA to the ribosomes. This Pelodictyon phaeoclathratiforme (strain DSM 5477 / BU-1) protein is Small ribosomal subunit protein uS10.